Reading from the N-terminus, the 339-residue chain is Phenylalanine--tRNA ligase alpha subunit (339 aa).

Glutamate 253 lines the Mg(2+) pocket.

Belongs to the class-II aminoacyl-tRNA synthetase family. Phe-tRNA synthetase alpha subunit type 1 subfamily. As to quaternary structure, tetramer of two alpha and two beta subunits. Requires Mg(2+) as cofactor.

The protein localises to the cytoplasm. It catalyses the reaction tRNA(Phe) + L-phenylalanine + ATP = L-phenylalanyl-tRNA(Phe) + AMP + diphosphate + H(+). This Thioalkalivibrio sulfidiphilus (strain HL-EbGR7) protein is Phenylalanine--tRNA ligase alpha subunit.